Here is a 476-residue protein sequence, read N- to C-terminus: Glycogen synthase (476 aa).

Lysine 15 provides a ligand contact to ADP-alpha-D-glucose.

Belongs to the glycosyltransferase 1 family. Bacterial/plant glycogen synthase subfamily.

The catalysed reaction is [(1-&gt;4)-alpha-D-glucosyl](n) + ADP-alpha-D-glucose = [(1-&gt;4)-alpha-D-glucosyl](n+1) + ADP + H(+). It participates in glycan biosynthesis; glycogen biosynthesis. Functionally, synthesizes alpha-1,4-glucan chains using ADP-glucose. This Bacillus anthracis protein is Glycogen synthase.